The chain runs to 504 residues: L-carnitine/gamma-butyrobetaine antiporter (504 aa).

12 consecutive transmembrane segments (helical) span residues 10–30 (IEPKVFFPPLIIVGILCWLTV), 51–71 (WGWAFEWYMVVMLFGWFWLVF), 92–112 (IFMMFASCTSAAVLFWGSIEI), 143–163 (GPLPWATYSFLSVAFAYFFFV), 195–215 (FYLVALIFAMGTSLGLATPLV), 231–251 (LDAIIITCWIILNAICVACGL), 263–283 (SYLSFLMLGWVFIVSGASFIM), 316–336 (WTVFYWAWWVIYAIQMSIFLA), 347–367 (LCFGMVLGLTASTWILWTVLG), 398–418 (WAALPLSTATMWGFFILCFIA), 446–466 (LLVRIGWSILVGIIGIVLLAL), and 475–495 (AIIAGGCPLFFVNIMVTLSFI).

Belongs to the BCCT transporter (TC 2.A.15) family. CaiT subfamily. Homotrimer.

The protein localises to the cell inner membrane. It carries out the reaction 4-(trimethylamino)butanoate(in) + (R)-carnitine(out) = 4-(trimethylamino)butanoate(out) + (R)-carnitine(in). It participates in amine and polyamine metabolism; carnitine metabolism. In terms of biological role, catalyzes the exchange of L-carnitine for gamma-butyrobetaine. This Escherichia coli (strain ATCC 8739 / DSM 1576 / NBRC 3972 / NCIMB 8545 / WDCM 00012 / Crooks) protein is L-carnitine/gamma-butyrobetaine antiporter.